We begin with the raw amino-acid sequence, 223 residues long: Urease accessory protein UreF (223 aa).

This sequence belongs to the UreF family. In terms of assembly, ureD, UreF and UreG form a complex that acts as a GTP-hydrolysis-dependent molecular chaperone, activating the urease apoprotein by helping to assemble the nickel containing metallocenter of UreC. The UreE protein probably delivers the nickel.

The protein resides in the cytoplasm. Required for maturation of urease via the functional incorporation of the urease nickel metallocenter. The chain is Urease accessory protein UreF from Pseudomonas paraeruginosa (strain DSM 24068 / PA7) (Pseudomonas aeruginosa (strain PA7)).